A 171-amino-acid chain; its full sequence is Group 1 truncated hemoglobin LI410 (171 aa).

Residues 1–23 constitute a chloroplast transit peptide; that stretch reads MMRTVQLRTLRPCIRAQQQPVRA. Tyr-63 and His-111 together coordinate heme.

It belongs to the truncated hemoglobin family. Group I subfamily. Heme is required as a cofactor.

Its subcellular location is the plastid. It localises to the chloroplast. The polypeptide is Group 1 truncated hemoglobin LI410 (LI410) (Chlamydomonas moewusii (Chlamydomonas eugametos)).